Consider the following 210-residue polypeptide: 3-hexulose-6-phosphate synthase (210 aa).

This sequence belongs to the HPS/KGPDC family. HPS subfamily.

The catalysed reaction is D-ribulose 5-phosphate + formaldehyde = D-arabino-hex-3-ulose 6-phosphate. It functions in the pathway one-carbon metabolism; formaldehyde assimilation via RuMP pathway; D-fructose 6-phosphate from D-ribulose 5-phosphate and formaldehyde: step 1/2. In terms of biological role, catalyzes the condensation of ribulose 5-phosphate with formaldehyde to form 3-hexulose 6-phosphate. The protein is 3-hexulose-6-phosphate synthase of Staphylococcus epidermidis (strain ATCC 12228 / FDA PCI 1200).